Here is a 205-residue protein sequence, read N- to C-terminus: 3-demethoxyubiquinol 3-hydroxylase (205 aa).

Glu54, Glu84, His87, Glu136, Glu168, and His171 together coordinate Fe cation.

Belongs to the COQ7 family. Fe cation is required as a cofactor.

It is found in the cell membrane. It catalyses the reaction a 5-methoxy-2-methyl-3-(all-trans-polyprenyl)benzene-1,4-diol + AH2 + O2 = a 3-demethylubiquinol + A + H2O. Its pathway is cofactor biosynthesis; ubiquinone biosynthesis. In terms of biological role, catalyzes the hydroxylation of 2-nonaprenyl-3-methyl-6-methoxy-1,4-benzoquinol during ubiquinone biosynthesis. This Acidovorax sp. (strain JS42) protein is 3-demethoxyubiquinol 3-hydroxylase.